The chain runs to 336 residues: 4-hydroxy-2-oxovalerate aldolase (336 aa).

Residues 5-255 (IRIIDSTLRD…ETGVDLYKIM (251 aa)) enclose the Pyruvate carboxyltransferase domain. Position 13–14 (13–14 (RD)) interacts with substrate. Asp-14 is a binding site for Mn(2+). The Proton acceptor role is filled by His-17. Residues Ser-167 and His-194 each coordinate substrate. Mn(2+) is bound by residues His-194 and His-196. Tyr-285 serves as a coordination point for substrate.

It belongs to the 4-hydroxy-2-oxovalerate aldolase family.

The enzyme catalyses (S)-4-hydroxy-2-oxopentanoate = acetaldehyde + pyruvate. The polypeptide is 4-hydroxy-2-oxovalerate aldolase (mhpE) (Carboxydothermus hydrogenoformans (strain ATCC BAA-161 / DSM 6008 / Z-2901)).